The sequence spans 84 residues: Large ribosomal subunit protein bL31 (84 aa).

Residues C16, C18, C38, and C41 each contribute to the Zn(2+) site.

Belongs to the bacterial ribosomal protein bL31 family. Type A subfamily. Part of the 50S ribosomal subunit. Zn(2+) serves as cofactor.

Functionally, binds the 23S rRNA. The polypeptide is Large ribosomal subunit protein bL31 (Mycobacterium leprae (strain Br4923)).